The sequence spans 178 residues: MIITIGGLPGTGTTTTSKLISEKYGLNHVCAGFIFRDMAKERNMTLQEFSSYAETNTEVDNEIDRRQVEAAQSGDLILEGRLAGWILKKSDIKPDLSIWLKADPMVRCIRISERENENVDLALEKMISREASEKKRYKEIYNIEIDDLSIYDIVIESSKWDANGVFNIIEKAIENLKA.

An ATP-binding site is contributed by 7 to 15 (GLPGTGTTT).

The protein belongs to the cytidylate kinase family. Type 2 subfamily.

Its subcellular location is the cytoplasm. The enzyme catalyses CMP + ATP = CDP + ADP. It catalyses the reaction dCMP + ATP = dCDP + ADP. The protein is Cytidylate kinase of Methanococcus maripaludis (strain C7 / ATCC BAA-1331).